The sequence spans 459 residues: Cobyrinate a,c-diamide synthase (459 aa).

A GATase cobBQ-type domain is found at 249–446; the sequence is RIGMAFDEAF…VHTHFASRPG (198 aa). Residue C332 is the Nucleophile of the active site.

This sequence belongs to the CobB/CbiA family. It depends on Mg(2+) as a cofactor.

It catalyses the reaction cob(II)yrinate + 2 L-glutamine + 2 ATP + 2 H2O = cob(II)yrinate a,c diamide + 2 L-glutamate + 2 ADP + 2 phosphate + 2 H(+). The protein operates within cofactor biosynthesis; adenosylcobalamin biosynthesis; cob(II)yrinate a,c-diamide from sirohydrochlorin (anaerobic route): step 10/10. Functionally, catalyzes the ATP-dependent amidation of the two carboxylate groups at positions a and c of cobyrinate, using either L-glutamine or ammonia as the nitrogen source. This Syntrophotalea carbinolica (strain DSM 2380 / NBRC 103641 / GraBd1) (Pelobacter carbinolicus) protein is Cobyrinate a,c-diamide synthase.